The following is a 185-amino-acid chain: Large ribosomal subunit protein uL5 (185 aa).

The protein belongs to the universal ribosomal protein uL5 family. In terms of assembly, part of the 50S ribosomal subunit; part of the 5S rRNA/L5/L18/L25 subcomplex. Contacts the 5S rRNA and the P site tRNA. Forms a bridge to the 30S subunit in the 70S ribosome.

This is one of the proteins that bind and probably mediate the attachment of the 5S RNA into the large ribosomal subunit, where it forms part of the central protuberance. In the 70S ribosome it contacts protein S13 of the 30S subunit (bridge B1b), connecting the 2 subunits; this bridge is implicated in subunit movement. Contacts the P site tRNA; the 5S rRNA and some of its associated proteins might help stabilize positioning of ribosome-bound tRNAs. This is Large ribosomal subunit protein uL5 from Nitrobacter winogradskyi (strain ATCC 25391 / DSM 10237 / CIP 104748 / NCIMB 11846 / Nb-255).